The following is a 202-amino-acid chain: Small ribosomal subunit protein uS4c (202 aa).

Residues 90–153 (MRLDNVIFRL…KSEAIISKNI (64 aa)) enclose the S4 RNA-binding domain.

It belongs to the universal ribosomal protein uS4 family. In terms of assembly, part of the 30S ribosomal subunit. Contacts protein S5. The interaction surface between S4 and S5 is involved in control of translational fidelity.

It is found in the plastid. It localises to the chloroplast. In terms of biological role, one of the primary rRNA binding proteins, it binds directly to 16S rRNA where it nucleates assembly of the body of the 30S subunit. With S5 and S12 plays an important role in translational accuracy. The polypeptide is Small ribosomal subunit protein uS4c (rps4) (Hypopterygium didictyon).